An 854-amino-acid polypeptide reads, in one-letter code: Protein mono-ADP-ribosyltransferase PARP8 (854 aa).

Disordered stretches follow at residues 113 to 138 (NGEE…EFYY) and 291 to 310 (SYPP…EQDG). A compositionally biased stretch (acidic residues) spans 123–135 (VEEDSEGDNDSEE). An ADP-ribosylcysteine mark is found at Cys-332, Cys-367, Cys-376, and Cys-395. In terms of domain architecture, PARP catalytic spans 617-844 (EMTQAPYLEI…QEGGIHKEIL (228 aa)). Positions 750–777 (QKVSAKDEPASSSKSSNTSQSQKKGQQS) are disordered. Positions 760–777 (SSSKSSNTSQSQKKGQQS) are enriched in low complexity.

The protein belongs to the ARTD/PARP family. In terms of processing, auto-mono-ADP-ribosylated.

The catalysed reaction is L-cysteinyl-[protein] + NAD(+) = S-(ADP-D-ribosyl)-L-cysteinyl-[protein] + nicotinamide + H(+). Its function is as follows. Mono-ADP-ribosyltransferase that mediates mono-ADP-ribosylation of target proteins. The polypeptide is Protein mono-ADP-ribosyltransferase PARP8 (Homo sapiens (Human)).